A 412-amino-acid polypeptide reads, in one-letter code: Peptidase T (412 aa).

H84 contacts Zn(2+). The active site involves D86. Residue D146 coordinates Zn(2+). The active-site Proton acceptor is E179. Positions 180, 202, and 385 each coordinate Zn(2+).

Belongs to the peptidase M20B family. It depends on Zn(2+) as a cofactor.

The protein localises to the cytoplasm. It carries out the reaction Release of the N-terminal residue from a tripeptide.. Cleaves the N-terminal amino acid of tripeptides. In Haemophilus influenzae (strain PittGG), this protein is Peptidase T.